A 317-amino-acid chain; its full sequence is MSQVTNTTQEGIYFILTDIPGFEASHIWISIPVCCLYTISIMGNTTILTVIRTEPSVHQRMYLFLSMLALTDLGLTLTTLPTVMQLLWFNVRRISSEACFAQFFFLHGFSFMESSVLLAMSVDCYVAICCPLHYASILTNEVIGRTGLAIICCCVLAVLPSLFLLKRLPFCHSHLLSRSYCLHQDMIRLVCADIRLNSWYGFALALLIIIVDPLLIVISYTLILKNILGTATWAERLRALNNCLSHILAVLVLYIPMVGVSMTHRFAKHASPLVHVIMANIYLLAPPVMNPIIYSVKNKQIQWGMLNFLSLKNMHSR.

Residues 1–27 (MSQVTNTTQEGIYFILTDIPGFEASHI) lie on the Extracellular side of the membrane. N-linked (GlcNAc...) asparagine glycosylation is present at Asn-6. Residues 28-48 (WISIPVCCLYTISIMGNTTIL) traverse the membrane as a helical segment. The Cytoplasmic portion of the chain corresponds to 49-56 (TVIRTEPS). The helical transmembrane segment at 57 to 77 (VHQRMYLFLSMLALTDLGLTL) threads the bilayer. Over 78–101 (TTLPTVMQLLWFNVRRISSEACFA) the chain is Extracellular. A disulfide bond links Cys-99 and Cys-191. The chain crosses the membrane as a helical span at residues 102 to 122 (QFFFLHGFSFMESSVLLAMSV). The Cytoplasmic portion of the chain corresponds to 123 to 141 (DCYVAICCPLHYASILTNE). A helical membrane pass occupies residues 142–162 (VIGRTGLAIICCCVLAVLPSL). The Extracellular portion of the chain corresponds to 163-198 (FLLKRLPFCHSHLLSRSYCLHQDMIRLVCADIRLNS). The chain crosses the membrane as a helical span at residues 199-219 (WYGFALALLIIIVDPLLIVIS). Over 220 to 239 (YTLILKNILGTATWAERLRA) the chain is Cytoplasmic. The helical transmembrane segment at 240 to 260 (LNNCLSHILAVLVLYIPMVGV) threads the bilayer. Residues 261 to 275 (SMTHRFAKHASPLVH) are Extracellular-facing. A helical membrane pass occupies residues 276–296 (VIMANIYLLAPPVMNPIIYSV). Residues 297 to 317 (KNKQIQWGMLNFLSLKNMHSR) lie on the Cytoplasmic side of the membrane.

Belongs to the G-protein coupled receptor 1 family.

Its subcellular location is the cell membrane. Odorant receptor. In Homo sapiens (Human), this protein is Olfactory receptor 51Q1 (OR51Q1).